Here is a 248-residue protein sequence, read N- to C-terminus: 3-deoxy-manno-octulosonate cytidylyltransferase (248 aa).

It belongs to the KdsB family.

It localises to the cytoplasm. It catalyses the reaction 3-deoxy-alpha-D-manno-oct-2-ulosonate + CTP = CMP-3-deoxy-beta-D-manno-octulosonate + diphosphate. The protein operates within nucleotide-sugar biosynthesis; CMP-3-deoxy-D-manno-octulosonate biosynthesis; CMP-3-deoxy-D-manno-octulosonate from 3-deoxy-D-manno-octulosonate and CTP: step 1/1. Its pathway is bacterial outer membrane biogenesis; lipopolysaccharide biosynthesis. Its function is as follows. Activates KDO (a required 8-carbon sugar) for incorporation into bacterial lipopolysaccharide in Gram-negative bacteria. The protein is 3-deoxy-manno-octulosonate cytidylyltransferase of Escherichia coli O127:H6 (strain E2348/69 / EPEC).